A 193-amino-acid chain; its full sequence is MSMHIIAGLGNPGSHYQWTRHNAGFLFLDRLAHLENVSITRKSFSGLAGEWSRANCRHILLKPQTFMNLSGRSVMQALQFYKLPLSQAIVVHDDLDLPFGTVRLKQGGGHGGHNGLRSIMEQLGKGDFIRLRVGIGRPLHGDTVNYVLGSMPPEQMELLPRILDGGLEMLEMLLDQGLPKAMSLFNNRNFLEK.

Tyr-16 contacts tRNA. His-21 acts as the Proton acceptor in catalysis. TRNA contacts are provided by Phe-66, Asn-68, and Asn-114.

It belongs to the PTH family. As to quaternary structure, monomer.

Its subcellular location is the cytoplasm. It catalyses the reaction an N-acyl-L-alpha-aminoacyl-tRNA + H2O = an N-acyl-L-amino acid + a tRNA + H(+). Hydrolyzes ribosome-free peptidyl-tRNAs (with 1 or more amino acids incorporated), which drop off the ribosome during protein synthesis, or as a result of ribosome stalling. Its function is as follows. Catalyzes the release of premature peptidyl moieties from peptidyl-tRNA molecules trapped in stalled 50S ribosomal subunits, and thus maintains levels of free tRNAs and 50S ribosomes. This Pelobacter propionicus (strain DSM 2379 / NBRC 103807 / OttBd1) protein is Peptidyl-tRNA hydrolase.